Here is a 193-residue protein sequence, read N- to C-terminus: dCTP deaminase (193 aa).

Residues 110 to 115 (RSSLAR), Asp-128, 136 to 138 (VLE), Tyr-171, Lys-178, and Gln-182 each bind dCTP. Residue Glu-138 is the Proton donor/acceptor of the active site. Residues 169-193 (RPYNRRQDAKYRDQQGAVASRIDKD) form a disordered region.

Belongs to the dCTP deaminase family. As to quaternary structure, homotrimer.

The enzyme catalyses dCTP + H2O + H(+) = dUTP + NH4(+). The protein operates within pyrimidine metabolism; dUMP biosynthesis; dUMP from dCTP (dUTP route): step 1/2. In terms of biological role, catalyzes the deamination of dCTP to dUTP. In Cronobacter sakazakii (strain ATCC BAA-894) (Enterobacter sakazakii), this protein is dCTP deaminase.